The sequence spans 442 residues: SPRY domain-containing protein 3 (442 aa).

The B30.2/SPRY domain maps to 17–204 (DLNLHYRFLN…VRLHLNAELG (188 aa)). A disordered region spans residues 371-394 (EGEEEEEEEEEEEDGEEIEPEHEG). The span at 372 to 390 (GEEEEEEEEEEEDGEEIEP) shows a compositional bias: acidic residues.

The protein is SPRY domain-containing protein 3 (SPRYD3) of Pongo abelii (Sumatran orangutan).